We begin with the raw amino-acid sequence, 714 residues long: Mitochondrial division protein 1 (714 aa).

Residues 240 to 298 (LNIQKNSTLSEIRDIEVEVENLRQKKEKLLGKIANIEQNQLLLEDNLKQIDDRLDFLEE) are a coiled coil. The disordered stretch occupies residues 323–354 (LKNDAIRNEGVTTESISSEASNLPPRRRQQLR). Over residues 332-343 (GVTTESISSEAS) the composition is skewed to polar residues. At serine 376 the chain carries Phosphoserine. WD repeat units lie at residues 396-436 (THDD…KIGE), 439-478 (GHLA…QLYQ), 500-539 (AHTD…QTID), 561-603 (TQRN…RTLK), 604-642 (GHTD…NKFH), 644-681 (YSAP…SWSC), and 685-714 (GNET…IWAV).

It belongs to the WD repeat MDV1/CAF4 family. Interacts with CAF4, DNM1 and FIS1, components of the mitochondrial fission machinery. Interacts via its N-terminal, coiled-coil extension (NTE) with FIS1, and via its WD repeats with DNM1.

The protein localises to the mitochondrion outer membrane. In terms of biological role, involved in mitochondrial fission. Has a partially redundant function to CAF4 in acting as an adapter protein, binding to FIS1 on the mitochondrial outer membrane and recruiting the dynamin-like GTPase DNM1 to form mitochondrial fission complexes. Formation of these complexes is required to promote constriction and fission of the mitochondrial compartment at a late step in mitochondrial division. The sequence is that of Mitochondrial division protein 1 (MDV1) from Saccharomyces cerevisiae (strain ATCC 204508 / S288c) (Baker's yeast).